Consider the following 250-residue polypeptide: NADH-quinone oxidoreductase subunit C (250 aa).

Belongs to the complex I 30 kDa subunit family. NDH-1 is composed of 14 different subunits. Subunits NuoB, C, D, E, F, and G constitute the peripheral sector of the complex.

The protein resides in the cell inner membrane. It carries out the reaction a quinone + NADH + 5 H(+)(in) = a quinol + NAD(+) + 4 H(+)(out). Functionally, NDH-1 shuttles electrons from NADH, via FMN and iron-sulfur (Fe-S) centers, to quinones in the respiratory chain. The immediate electron acceptor for the enzyme in this species is believed to be ubiquinone. Couples the redox reaction to proton translocation (for every two electrons transferred, four hydrogen ions are translocated across the cytoplasmic membrane), and thus conserves the redox energy in a proton gradient. The protein is NADH-quinone oxidoreductase subunit C of Xanthomonas euvesicatoria pv. vesicatoria (strain 85-10) (Xanthomonas campestris pv. vesicatoria).